We begin with the raw amino-acid sequence, 99 residues long: Nucleoid-associated protein SSA_0326 (99 aa).

Residues 1-15 (MMNMQSMMKQAQKLQ) are compositionally biased toward low complexity. Residues 1-23 (MMNMQSMMKQAQKLQKQMEKGQA) form a disordered region.

It belongs to the YbaB/EbfC family. As to quaternary structure, homodimer.

The protein resides in the cytoplasm. The protein localises to the nucleoid. Binds to DNA and alters its conformation. May be involved in regulation of gene expression, nucleoid organization and DNA protection. The sequence is that of Nucleoid-associated protein SSA_0326 from Streptococcus sanguinis (strain SK36).